A 532-amino-acid chain; its full sequence is E3 ubiquitin-protein ligase ICP0 (532 aa).

Residues Cys-8, Cys-11, Cys-24, His-26, Cys-29, Cys-32, Cys-43, and Cys-46 each coordinate Zn(2+). The RING-type zinc finger occupies 8 to 47 (CPICLEDPSNYSMALPCLHAFCYVCITRWIRQNPTCPLCK). 4 disordered regions span residues 206–391 (EYID…PMRP), 406–426 (APRD…AGPR), 461–498 (EDES…IRQG), and 510–532 (QTQP…RRNQ). Composition is skewed to acidic residues over residues 217-227 (SEEETDSDIEV) and 234-243 (DPEDTSDETS). Basic residues predominate over residues 286–295 (RSARLRRRQP).

In terms of processing, auto-ubiquitinated.

It carries out the reaction S-ubiquitinyl-[E2 ubiquitin-conjugating enzyme]-L-cysteine + [acceptor protein]-L-lysine = [E2 ubiquitin-conjugating enzyme]-L-cysteine + N(6)-ubiquitinyl-[acceptor protein]-L-lysine.. Evades nuclear antiviral defenses triggered by dsDNA viruses. Acts during the initial stages of lytic infection and the reactivation of latent viral genome. Prevents the antiviral effect of nuclear bodies by degrading host PML and SP100. The chain is E3 ubiquitin-protein ligase ICP0 (63) from Equus caballus (Horse).